Consider the following 446-residue polypeptide: Acyl-lipid (8-3)-desaturase (446 aa).

A Cytochrome b5 heme-binding domain is found at 6 to 82 (GKTFTWEELA…MKKYYVGTLV (77 aa)). The heme site is built by His41 and His64. The next 2 helical transmembrane spans lie at 125 to 145 (ALIF…PFVV) and 150 to 170 (LQVV…LNPL). Residues 171–175 (HDASH) carry the Histidine box-1 motif. Positions 207-212 (HMLGHH) match the Histidine box-2 motif. The short motif at 387–391 (QAVHH) is the Histidine box-3 element.

The protein belongs to the fatty acid desaturase type 1 family. The cofactor is Fe(2+).

The protein resides in the membrane. The catalysed reaction is an (8Z,11Z,14Z)-icosatrienoyl-containing glycerolipid + 2 Fe(II)-[cytochrome b5] + O2 + 2 H(+) = (5Z,8Z,11Z,14Z)-eicosatetraenoyl-containing glycerolipid + 2 Fe(III)-[cytochrome b5] + 2 H2O. It catalyses the reaction an (8Z,11Z,14Z,17Z)-eicosatetraenoyl-containing glycerolipid + 2 Fe(II)-[cytochrome b5] + O2 + 2 H(+) = a (5Z,8Z,11Z,14Z,17Z)-eicosapentaenoyl-containing glycerolipid + 2 Fe(III)-[cytochrome b5] + 2 H2O. Functionally, fatty acid desaturase that introduces a cis double bond at the 5-position in 20-carbon polyunsaturated fatty acids incorporated in a glycerolipid that contain a Delta(8) double bond. Involved in the conversion of di-homo-Delta-linolenic acid to arachidonic acid. Essential in the production of eicosanoids. The polypeptide is Acyl-lipid (8-3)-desaturase (DES1) (Mortierella alpina (Oleaginous fungus)).